A 421-amino-acid chain; its full sequence is Serine hydroxymethyltransferase (421 aa).

(6S)-5,6,7,8-tetrahydrofolate is bound by residues leucine 121 and 125 to 127; that span reads GHL. Lysine 229 carries the post-translational modification N6-(pyridoxal phosphate)lysine.

This sequence belongs to the SHMT family. As to quaternary structure, homodimer. It depends on pyridoxal 5'-phosphate as a cofactor.

The protein localises to the cytoplasm. It catalyses the reaction (6R)-5,10-methylene-5,6,7,8-tetrahydrofolate + glycine + H2O = (6S)-5,6,7,8-tetrahydrofolate + L-serine. It participates in one-carbon metabolism; tetrahydrofolate interconversion. The protein operates within amino-acid biosynthesis; glycine biosynthesis; glycine from L-serine: step 1/1. Functionally, catalyzes the reversible interconversion of serine and glycine with tetrahydrofolate (THF) serving as the one-carbon carrier. This reaction serves as the major source of one-carbon groups required for the biosynthesis of purines, thymidylate, methionine, and other important biomolecules. Also exhibits THF-independent aldolase activity toward beta-hydroxyamino acids, producing glycine and aldehydes, via a retro-aldol mechanism. This is Serine hydroxymethyltransferase from Haemophilus influenzae (strain 86-028NP).